The primary structure comprises 30 residues: Ampulexin 3 (30 aa).

The signal sequence occupies residues Met1–Gly17.

In terms of assembly, monomer. In terms of tissue distribution, expressed in venom sac and, to a lesser extent, in venom gland. Not expressed in brain.

The protein localises to the secreted. The protein is Ampulexin 3 of Ampulex compressa (Emerald cockroach wasp).